Consider the following 351-residue polypeptide: MAITPEKEKALAAAMAQIDRKFGKGSIMKMGEVGGRLAIEAIPTGSIALDIALGIGGVPRGRVIEIFGPESSGKTTLAQHIIAEAQKMGGVGAFIDAEHAFDPVYAARCGVNISDLLVSQPDTGEQALEICEMLVRSNAVDVIVIDSVAALVPRAEIEGDMGDSMPGMQARLMSQALRKLSGAISKSRAVVIFINQLRMKIGVMFGSPETTTGGQALKFYASVRLDIRRIETLKQGQEAIGSRVRVKVIKNKVAPPFRQAEFDILANEGISREGNIIDIGTELGIIRKSGAWFYLGEDRLGQGRENVREFLKNNPALTDEIERLIKAQALTNPSAIAPSADIGDDDGVFEE.

68-75 is a binding site for ATP; that stretch reads GPESSGKT.

The protein belongs to the RecA family.

The protein resides in the cytoplasm. Functionally, can catalyze the hydrolysis of ATP in the presence of single-stranded DNA, the ATP-dependent uptake of single-stranded DNA by duplex DNA, and the ATP-dependent hybridization of homologous single-stranded DNAs. It interacts with LexA causing its activation and leading to its autocatalytic cleavage. The sequence is that of Protein RecA from Chloroflexus aggregans (strain MD-66 / DSM 9485).